The chain runs to 500 residues: 4-aminobutyrate aminotransferase, mitochondrial (500 aa).

Residues M1 to I28 constitute a mitochondrion transit peptide. C163 is a [2Fe-2S] cluster binding site. Residue G164 to S165 coordinates pyridoxal 5'-phosphate. C166 serves as a coordination point for [2Fe-2S] cluster. Residue R220 coordinates substrate. K231 carries the post-translational modification N6-succinyllysine. Residue K252 is modified to N6-acetyllysine; alternate. K252 bears the N6-succinyllysine; alternate mark. K279 and K318 each carry N6-acetyllysine. K357 carries the post-translational modification N6-(pyridoxal phosphate)lysine. Pyridoxal 5'-phosphate is bound at residue T381. An N6-acetyllysine; alternate modification is found at K413. An N6-succinyllysine; alternate modification is found at K413. 2 positions are modified to N6-acetyllysine: K452 and K470.

This sequence belongs to the class-III pyridoxal-phosphate-dependent aminotransferase family. As to quaternary structure, homodimer; disulfide-linked. Pyridoxal 5'-phosphate serves as cofactor. [2Fe-2S] cluster is required as a cofactor.

The protein resides in the mitochondrion matrix. The catalysed reaction is 4-aminobutanoate + 2-oxoglutarate = succinate semialdehyde + L-glutamate. It catalyses the reaction (S)-3-amino-2-methylpropanoate + 2-oxoglutarate = 2-methyl-3-oxopropanoate + L-glutamate. Functionally, catalyzes the conversion of gamma-aminobutyrate and L-beta-aminoisobutyrate to succinate semialdehyde and methylmalonate semialdehyde, respectively. Can also convert delta-aminovalerate and beta-alanine. The protein is 4-aminobutyrate aminotransferase, mitochondrial (ABAT) of Bos taurus (Bovine).